We begin with the raw amino-acid sequence, 360 residues long: MDIGIFIPIGNNGWLISSNAPQYMPTFELNKQIVQTAEGYGFDFALSMIKLRGFGGKTEFWEHNLESFTLMAGLAAVTSKIQLFATVATLTIPPAIAARMASTIDSISNGRFGINLVTGWQKPEYEQMGLWPGDEFFHTRYEYLAEYAQVLRDLWATGSSDFKGEHFSMQDCRVSPRPKADMKLICAGQSEAGMAFSAQYADYNFCFGKGVNTPTAFAPTAQKLIEANEKTGRNVTSCVLFMIIADDTDEAARARWEHIKDGADEEAIAWLSEKGSADKSAGSNLRQMADPTSAVNINMGTLVGSWATVARMLDEVASVPGTQGVMLTFDDFVKGVEDFGEKIQPLMTSRKHIAQLKEVV.

Residues 49 to 50, asparagine 115, glutamate 124, 140 to 141, and serine 190 contribute to the FMN site; these read IK and RY.

Belongs to the NtaA/SnaA/DszA monooxygenase family. RutA subfamily.

The catalysed reaction is uracil + FMNH2 + NADH + O2 = (Z)-3-ureidoacrylate + FMN + NAD(+) + H2O + H(+). It carries out the reaction thymine + FMNH2 + NADH + O2 = (Z)-2-methylureidoacrylate + FMN + NAD(+) + H2O + H(+). Its function is as follows. Catalyzes the pyrimidine ring opening between N-3 and C-4 by an unusual flavin hydroperoxide-catalyzed mechanism, adding oxygen atoms in the process to yield ureidoacrylate peracid, that immediately reacts with FMN forming ureidoacrylate and FMN-N(5)-oxide. The FMN-N(5)-oxide reacts spontaneously with NADH to produce FMN. Requires the flavin reductase RutF to regenerate FMN in vivo. This is Pyrimidine monooxygenase RutA from Pseudomonas savastanoi pv. phaseolicola (strain 1448A / Race 6) (Pseudomonas syringae pv. phaseolicola (strain 1448A / Race 6)).